Reading from the N-terminus, the 344-residue chain is Eukaryotic translation initiation factor 2 subunit alpha homolog (344 aa).

The S1 motif domain occupies 21-92; it reads DMAVMIQVKN…EKGYIDLSKR (72 aa). A Phosphoserine; by GCN2 modification is found at S56. The disordered stretch occupies residues 312–344; sequence DNEEMSGDEDSGDEEEDTGMGEVDLDAGAGIIE. The span at 314-336 shows a compositional bias: acidic residues; it reads EEMSGDEDSGDEEEDTGMGEVDL.

Belongs to the eIF-2-alpha family. In terms of assembly, heterotrimer composed of an alpha, a beta and a gamma chain. Phosphorylated at Ser-56 by GCN2.

Functions in the early steps of protein synthesis by forming a ternary complex with GTP and initiator tRNA. This complex binds to a 40S ribosomal subunit, followed by mRNA binding to form a 43S pre-initiation complex. Junction of the 60S ribosomal subunit to form the 80S initiation complex is preceded by hydrolysis of the GTP bound to eIF-2 and release of an eIF-2-GDP binary complex. In order for eIF-2 to recycle and catalyze another round of initiation, the GDP bound to eIF-2 must exchange with GTP by way of a reaction catalyzed by eIF-2B. The polypeptide is Eukaryotic translation initiation factor 2 subunit alpha homolog (Arabidopsis thaliana (Mouse-ear cress)).